Reading from the N-terminus, the 973-residue chain is GATOR2 complex protein WDR59 (973 aa).

6 WD repeats span residues 57 to 98, 103 to 143, 146 to 185, 189 to 229, 232 to 276, and 280 to 324; these read QSKW…GEVC, GHTR…KPTV, SAVA…TAVE, AHLS…KYLN, PCQV…TPVH, and GHDD…QRLC. Residues 346–365 are disordered; the sequence is DKALQPQDSEPQHSSGHGDE. Residues 351–360 show a composition bias toward polar residues; that stretch reads PQDSEPQHSS. One can recognise an RWD domain in the interval 393–494; that stretch reads QEFSLINVQI…RQLVSWLESV (102 aa). The C4-type zinc-finger motif lies at 900–920; sequence YCSHCRSEARGTQCAICKGFT. C901, C904, C913, C916, C926, C937, H942, H945, H948, C959, C963, C965, and C967 together coordinate Zn(2+). The segment at 921 to 970 adopts an RING-type; atypical zinc-finger fold; the sequence is FQCAICHVAVRGSSNFCLTCGHGGHTSHMMEWFRTQEVCPTGCGCHCLLE.

It belongs to the WD repeat WDR59 family. Component of the GATOR2 subcomplex, composed of MIOS, SEC13, SEH1L, WDR24 and WDR59. The GATOR2 complex interacts with CASTOR1 and CASTOR2; the interaction is negatively regulated by arginine. The GATOR2 complex interacts with SESN1, SESN2 and SESN3; the interaction is negatively regulated by amino acids. Interacts with DDB1-CUL4A/B E3 ligase complexes.

Its subcellular location is the lysosome membrane. Its activity is regulated as follows. The GATOR2 complex is negatively regulated by the upstream amino acid sensors CASTOR1 and SESN2, which sequester the GATOR2 complex in absence of amino acids. In the presence of abundant amino acids, GATOR2 is released from CASTOR1 and SESN2 and activated. Functionally, as a component of the GATOR2 complex, functions as an activator of the amino acid-sensing branch of the mTORC1 signaling pathway. The GATOR2 complex indirectly activates mTORC1 through the inhibition of the GATOR1 subcomplex. GATOR2 probably acts as an E3 ubiquitin-protein ligase toward GATOR1. In the presence of abundant amino acids, the GATOR2 complex mediates ubiquitination of the NPRL2 core component of the GATOR1 complex, leading to GATOR1 inactivation. In the absence of amino acids, GATOR2 is inhibited, activating the GATOR1 complex. The chain is GATOR2 complex protein WDR59 from Gallus gallus (Chicken).